Here is a 408-residue protein sequence, read N- to C-terminus: tRNA-specific 2-thiouridylase MnmA (408 aa).

ATP-binding positions include glycine 38 to serine 45 and methionine 64. The interval asparagine 124–aspartate 126 is interaction with target base in tRNA. Residue cysteine 129 is the Nucleophile of the active site. Cysteine 129 and cysteine 231 form a disulfide bridge. Glycine 153 provides a ligand contact to ATP. The interval lysine 181–glutamine 183 is interaction with tRNA. The active-site Cysteine persulfide intermediate is the cysteine 231. Residues arginine 348 to tyrosine 349 form an interaction with tRNA region.

Belongs to the MnmA/TRMU family.

Its subcellular location is the cytoplasm. It carries out the reaction S-sulfanyl-L-cysteinyl-[protein] + uridine(34) in tRNA + AH2 + ATP = 2-thiouridine(34) in tRNA + L-cysteinyl-[protein] + A + AMP + diphosphate + H(+). Functionally, catalyzes the 2-thiolation of uridine at the wobble position (U34) of tRNA, leading to the formation of s(2)U34. The sequence is that of tRNA-specific 2-thiouridylase MnmA from Psychrobacter arcticus (strain DSM 17307 / VKM B-2377 / 273-4).